The sequence spans 254 residues: 3-deoxy-manno-octulosonate cytidylyltransferase (254 aa).

The protein belongs to the KdsB family.

It is found in the cytoplasm. It carries out the reaction 3-deoxy-alpha-D-manno-oct-2-ulosonate + CTP = CMP-3-deoxy-beta-D-manno-octulosonate + diphosphate. It participates in nucleotide-sugar biosynthesis; CMP-3-deoxy-D-manno-octulosonate biosynthesis; CMP-3-deoxy-D-manno-octulosonate from 3-deoxy-D-manno-octulosonate and CTP: step 1/1. It functions in the pathway bacterial outer membrane biogenesis; lipopolysaccharide biosynthesis. In terms of biological role, activates KDO (a required 8-carbon sugar) for incorporation into bacterial lipopolysaccharide in Gram-negative bacteria. In Pseudomonas aeruginosa (strain UCBPP-PA14), this protein is 3-deoxy-manno-octulosonate cytidylyltransferase.